The sequence spans 149 residues: Nucleoside diphosphate kinase (149 aa).

The ATP site is built by lysine 9, phenylalanine 57, arginine 85, threonine 91, arginine 102, and asparagine 112. Catalysis depends on histidine 115, which acts as the Pros-phosphohistidine intermediate.

Belongs to the NDK family. The cofactor is Mg(2+).

It is found in the cytoplasm. The enzyme catalyses a 2'-deoxyribonucleoside 5'-diphosphate + ATP = a 2'-deoxyribonucleoside 5'-triphosphate + ADP. It catalyses the reaction a ribonucleoside 5'-diphosphate + ATP = a ribonucleoside 5'-triphosphate + ADP. Its function is as follows. Major role in the synthesis of nucleoside triphosphates other than ATP. The ATP gamma phosphate is transferred to the NDP beta phosphate via a ping-pong mechanism, using a phosphorylated active-site intermediate. The polypeptide is Nucleoside diphosphate kinase (Methanoculleus marisnigri (strain ATCC 35101 / DSM 1498 / JR1)).